Here is a 198-residue protein sequence, read N- to C-terminus: Transcriptional regulator GfcR (198 aa).

This sequence belongs to the purine/pyrimidine phosphoribosyltransferase family. GfcR subfamily.

The sequence is that of Transcriptional regulator GfcR from Thermoplasma acidophilum (strain ATCC 25905 / DSM 1728 / JCM 9062 / NBRC 15155 / AMRC-C165).